A 420-amino-acid polypeptide reads, in one-letter code: ATP phosphoribosyltransferase regulatory subunit (420 aa).

Belongs to the class-II aminoacyl-tRNA synthetase family. HisZ subfamily. Heteromultimer composed of HisG and HisZ subunits.

The protein localises to the cytoplasm. It participates in amino-acid biosynthesis; L-histidine biosynthesis; L-histidine from 5-phospho-alpha-D-ribose 1-diphosphate: step 1/9. Its function is as follows. Required for the first step of histidine biosynthesis. May allow the feedback regulation of ATP phosphoribosyltransferase activity by histidine. This chain is ATP phosphoribosyltransferase regulatory subunit, found in Bacillus cereus (strain ATCC 14579 / DSM 31 / CCUG 7414 / JCM 2152 / NBRC 15305 / NCIMB 9373 / NCTC 2599 / NRRL B-3711).